The primary structure comprises 543 residues: Chaperonin GroEL (543 aa).

Residues 29–32 (TLGP), Lys-50, 86–90 (DGTTT), Gly-415, and Asp-495 each bind ATP.

Belongs to the chaperonin (HSP60) family. As to quaternary structure, forms a cylinder of 14 subunits composed of two heptameric rings stacked back-to-back. Interacts with the co-chaperonin GroES.

Its subcellular location is the cytoplasm. The catalysed reaction is ATP + H2O + a folded polypeptide = ADP + phosphate + an unfolded polypeptide.. Its function is as follows. Together with its co-chaperonin GroES, plays an essential role in assisting protein folding. The GroEL-GroES system forms a nano-cage that allows encapsulation of the non-native substrate proteins and provides a physical environment optimized to promote and accelerate protein folding. The protein is Chaperonin GroEL of Karelsulcia muelleri (strain GWSS) (Sulcia muelleri).